We begin with the raw amino-acid sequence, 569 residues long: Oxygen-dependent choline dehydrogenase (569 aa).

Residue 9-38 participates in FAD binding; sequence DYVIIGGGSAGSVLGNRLSEDKDKEVLVLE. Histidine 475 serves as the catalytic Proton acceptor.

It belongs to the GMC oxidoreductase family. FAD is required as a cofactor.

It carries out the reaction choline + A = betaine aldehyde + AH2. The catalysed reaction is betaine aldehyde + NAD(+) + H2O = glycine betaine + NADH + 2 H(+). The protein operates within amine and polyamine biosynthesis; betaine biosynthesis via choline pathway; betaine aldehyde from choline (cytochrome c reductase route): step 1/1. Its function is as follows. Involved in the biosynthesis of the osmoprotectant glycine betaine. Catalyzes the oxidation of choline to betaine aldehyde and betaine aldehyde to glycine betaine at the same rate. The protein is Oxygen-dependent choline dehydrogenase of Staphylococcus aureus (strain MSSA476).